Reading from the N-terminus, the 77-residue chain is Acyl carrier protein (77 aa).

Residues 2-77 (ADVLERVTKI…DAVTYIESHL (76 aa)) enclose the Carrier domain. Ser-37 is subject to O-(pantetheine 4'-phosphoryl)serine.

It belongs to the acyl carrier protein (ACP) family. In terms of processing, 4'-phosphopantetheine is transferred from CoA to a specific serine of apo-ACP by AcpS. This modification is essential for activity because fatty acids are bound in thioester linkage to the sulfhydryl of the prosthetic group.

It is found in the cytoplasm. It participates in lipid metabolism; fatty acid biosynthesis. Carrier of the growing fatty acid chain in fatty acid biosynthesis. This Bacillus mycoides (strain KBAB4) (Bacillus weihenstephanensis) protein is Acyl carrier protein.